Here is a 209-residue protein sequence, read N- to C-terminus: Putative 3-methyladenine DNA glycosylase (209 aa).

The protein belongs to the DNA glycosylase MPG family.

This Lactiplantibacillus plantarum (strain ATCC BAA-793 / NCIMB 8826 / WCFS1) (Lactobacillus plantarum) protein is Putative 3-methyladenine DNA glycosylase.